We begin with the raw amino-acid sequence, 234 residues long: Small ribosomal subunit protein uS3 (234 aa).

The 69-residue stretch at 39 to 107 folds into the KH type-2 domain; the sequence is IRKYVKKELY…EIAVNIKEER (69 aa). Over residues 213-222 the composition is skewed to basic and acidic residues; sequence PTEKAEETTS. The disordered stretch occupies residues 213-234; it reads PTEKAEETTSKPKRRPAKKRGK. Residues 223–234 are compositionally biased toward basic residues; the sequence is KPKRRPAKKRGK.

Belongs to the universal ribosomal protein uS3 family. Part of the 30S ribosomal subunit. Forms a tight complex with proteins S10 and S14.

Its function is as follows. Binds the lower part of the 30S subunit head. Binds mRNA in the 70S ribosome, positioning it for translation. This chain is Small ribosomal subunit protein uS3, found in Aliarcobacter butzleri (strain RM4018) (Arcobacter butzleri).